We begin with the raw amino-acid sequence, 509 residues long: Histidine--tRNA ligase, cytoplasmic (509 aa).

At Ala2 the chain carries N-acetylalanine. In terms of domain architecture, WHEP-TRS spans Glu3–Pro59. A Phosphoserine modification is found at Ser66. L-histidine-binding positions include Asp130 to Thr132, Arg157, Gln173, Asp177, Arg326, and Tyr330 to Tyr331. The residue at position 356 (Ser356) is a Phosphoserine.

It belongs to the class-II aminoacyl-tRNA synthetase family. Homodimer.

It localises to the cytoplasm. The catalysed reaction is tRNA(His) + L-histidine + ATP = L-histidyl-tRNA(His) + AMP + diphosphate + H(+). Functionally, catalyzes the ATP-dependent ligation of histidine to the 3'-end of its cognate tRNA, via the formation of an aminoacyl-adenylate intermediate (His-AMP). Plays a role in axon guidance. This Pongo abelii (Sumatran orangutan) protein is Histidine--tRNA ligase, cytoplasmic (HARS1).